A 353-amino-acid polypeptide reads, in one-letter code: E3 ubiquitin-protein ligase Os03g0188200 (353 aa).

The chain crosses the membrane as a helical span at residues 48-68 (VVVLVALITAFVLLTVFSVLI). The segment at 133-175 (CAVCLAEFADSDELRVLPACCHVFHPDCIDPWLAAAVTCPLCR) adopts an RING-type; atypical zinc-finger fold. 2 stretches are compositionally biased toward basic and acidic residues: residues 308–318 (ADWDAGEEHGG) and 340–353 (GSKENSDSDALNRV). The tract at residues 308 to 353 (ADWDAGEEHGGSKRVHPVAGAQDETPSGSGSDGSKENSDSDALNRV) is disordered.

The protein resides in the membrane. The catalysed reaction is S-ubiquitinyl-[E2 ubiquitin-conjugating enzyme]-L-cysteine + [acceptor protein]-L-lysine = [E2 ubiquitin-conjugating enzyme]-L-cysteine + N(6)-ubiquitinyl-[acceptor protein]-L-lysine.. It functions in the pathway protein modification; protein ubiquitination. Its function is as follows. Possesses E3 ubiquitin-protein ligase in vitro. The sequence is that of E3 ubiquitin-protein ligase Os03g0188200 from Oryza sativa subsp. japonica (Rice).